A 249-amino-acid polypeptide reads, in one-letter code: 5'-nucleotidase SurE (249 aa).

A divalent metal cation-binding residues include Asp-8, Asp-9, Ser-39, and Asn-91.

Belongs to the SurE nucleotidase family. A divalent metal cation is required as a cofactor.

It is found in the cytoplasm. It carries out the reaction a ribonucleoside 5'-phosphate + H2O = a ribonucleoside + phosphate. In terms of biological role, nucleotidase that shows phosphatase activity on nucleoside 5'-monophosphates. The protein is 5'-nucleotidase SurE of Haemophilus influenzae (strain PittGG).